The sequence spans 410 residues: Multifunctional CCA protein (410 aa).

ATP is bound by residues Gly-8 and Arg-11. Residues Gly-8 and Arg-11 each coordinate CTP. The Mg(2+) site is built by Asp-21 and Asp-23. Residues Arg-91, Arg-138, and Arg-141 each coordinate ATP. Residues Arg-91, Arg-138, and Arg-141 each contribute to the CTP site. Residues 229–347 (TGIHQEMVSD…AQLALVCEAD (119 aa)) enclose the HD domain.

It belongs to the tRNA nucleotidyltransferase/poly(A) polymerase family. Bacterial CCA-adding enzyme type 1 subfamily. In terms of assembly, monomer. Can also form homodimers and oligomers. It depends on Mg(2+) as a cofactor. Requires Ni(2+) as cofactor.

It carries out the reaction a tRNA precursor + 2 CTP + ATP = a tRNA with a 3' CCA end + 3 diphosphate. The catalysed reaction is a tRNA with a 3' CCA end + 2 CTP + ATP = a tRNA with a 3' CCACCA end + 3 diphosphate. Its function is as follows. Catalyzes the addition and repair of the essential 3'-terminal CCA sequence in tRNAs without using a nucleic acid template. Adds these three nucleotides in the order of C, C, and A to the tRNA nucleotide-73, using CTP and ATP as substrates and producing inorganic pyrophosphate. tRNA 3'-terminal CCA addition is required both for tRNA processing and repair. Also involved in tRNA surveillance by mediating tandem CCA addition to generate a CCACCA at the 3' terminus of unstable tRNAs. While stable tRNAs receive only 3'-terminal CCA, unstable tRNAs are marked with CCACCA and rapidly degraded. This chain is Multifunctional CCA protein, found in Xanthomonas axonopodis pv. citri (strain 306).